Consider the following 468-residue polypeptide: MGHRWGFLIVFLGAVGLLGSGYGRQQPSETAAQRCFCQVSGYLDDCTCDVETIDRFNNYRLFPRLQKLLESDYFRYYKVNLKRPCPFWNDINQCGRRDCAVKPCQSDEIPDGIKSASYKYSEEANNLIEECEQAERLGAVDESLSEETQKAVLQWTKHDDSSDNFCEADDIQSPDAEYVDLLLNPERYTGYKGPDAWKIWNVIYEENCFKPQTIKRPLNPLASGQGKSEENTFYSWLEGLCVEKRAFYRLISGLHASINVHLSARYLLQDTWLEKKWGHNITEFQQRFDGILTEGEGPRRLKNLYFLYLIELRALSKVVPFFERPDFQLFTGNKVQDAENKMLLLDILHEIKSFPLHFDENSFFAGDKKEANKLKEDFRLHFRNISRIMDCVGCLKCRLWGKLQTQGLGTALKILFSEKLIANMPESGPSYEFHLTRQEIVSLFNAFGRISTSVKELENFRNLLQNIH.

The signal sequence occupies residues 1–23 (MGHRWGFLIVFLGAVGLLGSGYG). Disulfide bonds link Cys35/Cys48, Cys37/Cys46, Cys85/Cys391, Cys94/Cys99, Cys94/Cys131, Cys99/Cys104, Cys208/Cys241, and Cys394/Cys397. Phosphoserine occurs at positions 106, 143, and 145. Positions 187, 189, and 200 each coordinate FAD. Ser252 and His255 together coordinate FAD. A glycan (N-linked (GlcNAc...) asparagine) is linked at Asn280. Residues Arg287 and Arg300 each contribute to the FAD site. Asn384 carries an N-linked (GlcNAc...) asparagine glycan.

It belongs to the EROs family. As to quaternary structure, predominantly monomer. May function both as a monomer and a homodimer. Interacts with PDILT. Interacts with ERP44; the interaction results in retention of ERO1A in the endoplasmic reticulum. Requires FAD as cofactor. Post-translationally, the Cys-94/Cys-99 and Cys-394/Cys-397 disulfide bonds constitute the redox-active center. The Cys-94/Cys-99 disulfide bond may accept electron from P4HB and funnel them to the active site disulfide Cys-394/Cys-397. The regulatory Cys-99/Cys-104 disulfide bond stabilizes the other regulatory bond Cys-94/Cys-131. In terms of processing, phosphorylated on Ser-145 by FAM20C in the Golgi which increases its enzymatic activity. Phosphorylation is induced by lactation. It is also induced by hypoxia and reductive stress.

The protein localises to the endoplasmic reticulum membrane. It is found in the golgi apparatus lumen. The protein resides in the secreted. It localises to the cell projection. Its subcellular location is the dendrite. Its activity is regulated as follows. Enzyme activity is tightly regulated to prevent the accumulation of reactive oxygen species in the endoplasmic reticulum. Reversibly down-regulated by the formation of disulfide bonds between the active site Cys-94 and Cys-131, and between Cys-99 and Cys-104. Glutathione may be required to regulate its activity in the endoplasmic reticulum. Oxidoreductase involved in disulfide bond formation in the endoplasmic reticulum. Efficiently reoxidizes P4HB/PDI, the enzyme catalyzing protein disulfide formation, in order to allow P4HB to sustain additional rounds of disulfide formation. Following P4HB reoxidation, passes its electrons to molecular oxygen via FAD, leading to the production of reactive oxygen species (ROS) in the cell. Required for the proper folding of immunoglobulins. Plays an important role in ER stress-induced, CHOP-dependent apoptosis by activating the inositol 1,4,5-trisphosphate receptor IP3R1. This chain is ERO1-like protein alpha, found in Sus scrofa (Pig).